The chain runs to 260 residues: Hydroxyethylthiazole kinase (260 aa).

A substrate-binding site is contributed by methionine 38. Residues arginine 114 and threonine 159 each contribute to the ATP site. Glycine 186 is a binding site for substrate.

It belongs to the Thz kinase family. Requires Mg(2+) as cofactor.

It catalyses the reaction 5-(2-hydroxyethyl)-4-methylthiazole + ATP = 4-methyl-5-(2-phosphooxyethyl)-thiazole + ADP + H(+). The protein operates within cofactor biosynthesis; thiamine diphosphate biosynthesis; 4-methyl-5-(2-phosphoethyl)-thiazole from 5-(2-hydroxyethyl)-4-methylthiazole: step 1/1. In terms of biological role, catalyzes the phosphorylation of the hydroxyl group of 4-methyl-5-beta-hydroxyethylthiazole (THZ). This chain is Hydroxyethylthiazole kinase, found in Helicobacter pylori (strain G27).